The following is a 252-amino-acid chain: MGRGKIEIKKIENQTARQVTFSKRRTGLIKKTRELSILCDAHIGLIVFSATGKLSEFCSEQNRMPQLIDRYLHTNGLRLPDHHDDQEQLHHEMELLRRETCNLELRLRPFHGHDLASIPPNELDGLERQLEHSVLKVRERKNELMQQQLENLSRKRRMLEEDNNNMYRWLHEHRAAMEFQQAGIDTKPGEYQQFIEQLQCYKPGEYQQFLEQQQQQPNSVLQLATLPSEIDPTYNLQLAQPNLQNDPTAQND.

The MADS-box domain maps to 1 to 61 (MGRGKIEIKK…GKLSEFCSEQ (61 aa)). The 91-residue stretch at 86-176 (QEQLHHEMEL…YRWLHEHRAA (91 aa)) folds into the K-box domain. The stretch at 121–174 (NELDGLERQLEHSVLKVRERKNELMQQQLENLSRKRRMLEEDNNNMYRWLHEHR) forms a coiled coil.

As to quaternary structure, interacts with AP1/AGL7, SEP1/AGL2, SEP2/AGL4, SEP3/AGL9 and AGL3/SEP4. As to expression, expressed in buds, flowers and immature seeds, but not in roots, stems, leaves, seedlings or siliques valves. Expression in seed coat is confined to the endothelium layer.

It localises to the nucleus. In terms of biological role, transcription factor involved in the developmental regulation of the endothelium and in the accumulation of proanthocyanidins (PAs) or condensed tannins which give the seed its brown pigmentation after oxidation. Necessary for the normal activation of the BANYULS promoter in the endothelium body. Is required, together with AGL11/STK for the maternal control of endothelium formation, which is essential for female gametophyte development and fertilization, and seed formation. Interacts genetically with AGL1/SHP1 and AGL5/SHP2 in a partially antagonistic manner and represses AGL1/SHP1, AGL5/SHP2, and AGL8/FUL during flower development. Is essential for the coordination of cell divisions in ovule, seed coat development and endosperm formation. Mediates the crosstalk between endothelium and nucellus to ensure proper seed formation. Functions redundantly with AGL63/GOA to repress nucellus growth and promote its degeneration. Represses the negative regulator of autophagy and programmed cell death HVA22D in the proximal nucellus. Binds specifically to the CArG box DNA sequence 5'-CC (A/T)6 GG-3'. The sequence is that of Protein TRANSPARENT TESTA 16 (TT16) from Arabidopsis thaliana (Mouse-ear cress).